Here is a 447-residue protein sequence, read N- to C-terminus: Acyl-CoA (8-3)-desaturase (447 aa).

Residue methionine 1 is modified to N-acetylmethionine. At 1–124 (MAPDPVPTPG…FRELRATVER (124 aa)) the chain is on the cytoplasmic side. A Cytochrome b5 heme-binding domain is found at 19-97 (TRYFTWEEVA…MNSLLIGELA (79 aa)). A helical membrane pass occupies residues 125 to 145 (MGLMKANHLFFLVYLLHILLL). The Lumenal portion of the chain corresponds to 146 to 160 (DVAAWLTLWIFGTSL). The helical transmembrane segment at 161–180 (VPFILCAVLLSTVQAQAGWL) threads the bilayer. Topologically, residues 181-268 (QHDFGHLSVF…HMPYNHQHKY (88 aa)) are cytoplasmic. The short motif at 182-186 (HDFGH) is the Histidine box-1 element. Residues 219–223 (HFQHH) carry the Histidine box-2 motif. Residues 269 to 289 (FFLIGPPALLPLYFQWYIFYF) traverse the membrane as a helical segment. The Lumenal segment spans residues 290 to 308 (VVQRKKWVDLAWMLSFYAR). The helical transmembrane segment at 309-329 (IFFTYMPLLGLKGFLGLFFIV) threads the bilayer. At 330–447 (RFLESNWFVW…QLWLDAYLHQ (118 aa)) the chain is on the cytoplasmic side. Residues 385-389 (QIEHH) carry the Histidine box-3 motif.

It belongs to the fatty acid desaturase type 1 family. Highly expressed in the adrenal gland, liver, brain, and testis, tissues where lipogenesis and steroidogenesis are active. Expressed in colonic mucosa.

The protein localises to the endoplasmic reticulum membrane. It is found in the mitochondrion. It carries out the reaction (8Z,11Z,14Z)-eicosatrienoyl-CoA + 2 Fe(II)-[cytochrome b5] + O2 + 2 H(+) = (5Z,8Z,11Z,14Z)-eicosatetraenoyl-CoA + 2 Fe(III)-[cytochrome b5] + 2 H2O. It catalyses the reaction (8Z,11Z,14Z,17Z)-eicosatetraenoyl-CoA + 2 Fe(II)-[cytochrome b5] + O2 + 2 H(+) = (5Z,8Z,11Z,14Z,17Z)-eicosapentaenoyl-CoA + 2 Fe(III)-[cytochrome b5] + 2 H2O. The enzyme catalyses (11E)-octadecenoyl-CoA + 2 Fe(II)-[cytochrome b5] + O2 + 2 H(+) = (5Z,11E)-octadecadienoyl-CoA + 2 Fe(III)-[cytochrome b5] + 2 H2O. It participates in lipid metabolism; polyunsaturated fatty acid biosynthesis. Its function is as follows. Acts as a front-end fatty acyl-coenzyme A (CoA) desaturase that introduces a cis double bond at carbon 5 located between a preexisting double bond and the carboxyl end of the fatty acyl chain. Involved in biosynthesis of highly unsaturated fatty acids (HUFA) from the essential polyunsaturated fatty acids (PUFA) linoleic acid (LA) (18:2n-6) and alpha-linolenic acid (ALA) (18:3n-3) precursors. Specifically, desaturates dihomo-gamma-linoleoate (DGLA) (20:3n-6) and eicosatetraenoate (ETA) (20:4n-3) to generate arachidonate (AA) (20:4n-6) and eicosapentaenoate (EPA) (20:5n-3), respectively. As a rate limiting enzyme for DGLA (20:3n-6) and AA (20:4n-6)-derived eicosanoid biosynthesis, controls the metabolism of inflammatory lipids like prostaglandin E2, critical for efficient acute inflammatory response and maintenance of epithelium homeostasis. Contributes to membrane phospholipid biosynthesis by providing AA (20:4n-6) as a major acyl chain esterified into phospholipids. In particular, regulates phosphatidylinositol-4,5-bisphosphate levels, modulating inflammatory cytokine production in T-cells. Also desaturates (11E)-octadecenoate (trans-vaccenoate)(18:1n-9), a metabolite in the biohydrogenation pathway of LA (18:2n-6). The protein is Acyl-CoA (8-3)-desaturase of Mus musculus (Mouse).